We begin with the raw amino-acid sequence, 1435 residues long: DNA polymerase III PolC-type (1435 aa).

The Exonuclease domain maps to 404 to 562 (YVVYDIETTG…YDSSVLTNIF (159 aa)).

It belongs to the DNA polymerase type-C family. PolC subfamily.

It is found in the cytoplasm. The catalysed reaction is DNA(n) + a 2'-deoxyribonucleoside 5'-triphosphate = DNA(n+1) + diphosphate. Required for replicative DNA synthesis. This DNA polymerase also exhibits 3' to 5' exonuclease activity. The chain is DNA polymerase III PolC-type from Mycoplasmopsis pulmonis (strain UAB CTIP) (Mycoplasma pulmonis).